Here is a 418-residue protein sequence, read N- to C-terminus: MNVTILGAGVVGVTSAWYLAKAGHKVTVIDRQPAAALETSFANAGEVSPGYSSPWAAPGIPMKAMKWLFMKHAPLIIRPTADPAAWRWMSQMLRNCTSARYAINKSRMVRVAEYSRDCLMALREETGIDYDQRMQGTLEVFRTQKQFDAIGKDVDVLTAGGVPFEILDRDGCAAIEPGLAPAKEKIVGGLRLPGDETGDCFMFTTELARMAEEAGVTFLYDTGIMRPIVEGGRIKAVETTRGLIEADIFVAALGSYSPQFVRQLGLTLPVYPVKGYSITVPIVKEERAPVSTVMDETFKVAITRLGSRIRAGGMAEIAGFSKDLPAARQETLAHSVEDLFGGAGDQSQAKFWCGLRPMTPDGTPVIGATRYSNLYLNTGHGTLGWTMSCGSARVLADLISGNKPEIDTHDLAISRYAA.

Position 3-17 (V3–W17) interacts with FAD.

This sequence belongs to the DadA oxidoreductase family. The cofactor is FAD.

It carries out the reaction a D-alpha-amino acid + A + H2O = a 2-oxocarboxylate + AH2 + NH4(+). Its pathway is amino-acid degradation; D-alanine degradation; NH(3) and pyruvate from D-alanine: step 1/1. Its function is as follows. Oxidative deamination of D-amino acids. The chain is D-amino acid dehydrogenase from Agrobacterium fabrum (strain C58 / ATCC 33970) (Agrobacterium tumefaciens (strain C58)).